The chain runs to 450 residues: UDP-N-acetylmuramoylalanine--D-glutamate ligase (450 aa).

119–125 (GSNGKTT) contributes to the ATP binding site.

It belongs to the MurCDEF family.

Its subcellular location is the cytoplasm. The enzyme catalyses UDP-N-acetyl-alpha-D-muramoyl-L-alanine + D-glutamate + ATP = UDP-N-acetyl-alpha-D-muramoyl-L-alanyl-D-glutamate + ADP + phosphate + H(+). It functions in the pathway cell wall biogenesis; peptidoglycan biosynthesis. Its function is as follows. Cell wall formation. Catalyzes the addition of glutamate to the nucleotide precursor UDP-N-acetylmuramoyl-L-alanine (UMA). This chain is UDP-N-acetylmuramoylalanine--D-glutamate ligase, found in Bacillus cereus (strain AH187).